A 619-amino-acid chain; its full sequence is MELTQKERELSRWAAEEMEVPLAARPRESTLRRLCLSQGADIWAYIVQHVRSQRNIKKIQGNLLWHAYQDNPKIHRKLELEATVARLRAENQELDQSLELMDQESEAQDVAMTQTLQSLKDTQHRALLLQAQAGAVRRQQRGLQDPMQRLQNQLKHLQDMQRKAKVDVTFGPVVSAAPALEPEVLGDVRAACTLRTQFLQNLLTPRARGGSILSPCDDHVGTSYQQWLTSVETLLTNHPAGHVLAALEYLAAERESEIRSLCYGDGLKEEELSRPQAPESSNSSQVLPSTVHLIQEGWQAVGALVTQRSALLSERQVLTGRLQRLVEEVKRLLLGSSERKVLLLGLRHSGLLAELKALHAQSQELESAVGQRHLLLRELQAKRQRILQWRQLVEDRQEQIRLLIKGNSASKTRLSRGPEEVLALIDQKLVPTSEAVAPQSQELLRCLKEEAKHLPRVLLGPLLPYHVKGLKPLSRILPSIHQLHPTNPRASSLILLSHTLGLPVGKASELLLPRAASLQQDLLFLQDQLGLRRGNLCVKTSLPPGPSTQELLQMQVSQEKEQNENVGQTLKKLSNLLKQALEQIPELQGIVQDWWEQPSQAALPEEICQGLSLPQCQLR.

An N-acetylmethionine modification is found at methionine 1. Coiled coils occupy residues 73-108 (KIHR…SEAQ), 310-395 (ALLS…LVED), and 550-590 (ELLQ…LQGI).

This sequence belongs to the HAUS5 family. As to quaternary structure, component of the HAUS augmin-like complex. The complex interacts with the gamma-tubulin ring complex and this interaction is required for spindle assembly. Interacts with EML3 (phosphorylated at 'Thr-882').

It is found in the cytoplasm. It localises to the cytoskeleton. Its subcellular location is the microtubule organizing center. The protein localises to the centrosome. The protein resides in the spindle. Functionally, contributes to mitotic spindle assembly, maintenance of centrosome integrity and completion of cytokinesis as part of the HAUS augmin-like complex. This is HAUS augmin-like complex subunit 5 (Haus5) from Mus musculus (Mouse).